The primary structure comprises 715 residues: Polyribonucleotide nucleotidyltransferase (715 aa).

Mg(2+)-binding residues include Asp-488 and Asp-494. Positions Pro-555–Ile-614 constitute a KH domain. One can recognise an S1 motif domain in the interval Gly-624–Lys-692. The segment at Lys-692 to Ala-715 is disordered. Over residues Asp-701–Ala-715 the composition is skewed to basic and acidic residues.

Belongs to the polyribonucleotide nucleotidyltransferase family. Requires Mg(2+) as cofactor.

It is found in the cytoplasm. It carries out the reaction RNA(n+1) + phosphate = RNA(n) + a ribonucleoside 5'-diphosphate. In terms of biological role, involved in mRNA degradation. Catalyzes the phosphorolysis of single-stranded polyribonucleotides processively in the 3'- to 5'-direction. The chain is Polyribonucleotide nucleotidyltransferase from Phenylobacterium zucineum (strain HLK1).